The chain runs to 558 residues: Dihydroxy-acid dehydratase (558 aa).

A [2Fe-2S] cluster-binding site is contributed by C50. Position 82 (D82) interacts with Mg(2+). C123 lines the [2Fe-2S] cluster pocket. Residues D124 and K125 each contribute to the Mg(2+) site. K125 is modified (N6-carboxylysine). C195 serves as a coordination point for [2Fe-2S] cluster. E447 contacts Mg(2+). The Proton acceptor role is filled by S472.

The protein belongs to the IlvD/Edd family. Homodimer. The cofactor is [2Fe-2S] cluster. It depends on Mg(2+) as a cofactor.

It carries out the reaction (2R)-2,3-dihydroxy-3-methylbutanoate = 3-methyl-2-oxobutanoate + H2O. It catalyses the reaction (2R,3R)-2,3-dihydroxy-3-methylpentanoate = (S)-3-methyl-2-oxopentanoate + H2O. Its pathway is amino-acid biosynthesis; L-isoleucine biosynthesis; L-isoleucine from 2-oxobutanoate: step 3/4. It functions in the pathway amino-acid biosynthesis; L-valine biosynthesis; L-valine from pyruvate: step 3/4. In terms of biological role, functions in the biosynthesis of branched-chain amino acids. Catalyzes the dehydration of (2R,3R)-2,3-dihydroxy-3-methylpentanoate (2,3-dihydroxy-3-methylvalerate) into 2-oxo-3-methylpentanoate (2-oxo-3-methylvalerate) and of (2R)-2,3-dihydroxy-3-methylbutanoate (2,3-dihydroxyisovalerate) into 2-oxo-3-methylbutanoate (2-oxoisovalerate), the penultimate precursor to L-isoleucine and L-valine, respectively. The protein is Dihydroxy-acid dehydratase of Saccharolobus islandicus (strain Y.N.15.51 / Yellowstone #2) (Sulfolobus islandicus).